The primary structure comprises 135 residues: FK506-binding protein 2 (135 aa).

An N-terminal signal peptide occupies residues 1–20 (MRVPIITTLLTLALTGLSQA). In terms of domain architecture, PPIase FKBP-type spans 40-128 (GDTVKMHYRG…IFQTELLEIE (89 aa)). Positions 132–135 (KDEL) match the Prevents secretion from ER motif.

This sequence belongs to the FKBP-type PPIase family. FKBP2 subfamily.

The protein localises to the endoplasmic reticulum. It catalyses the reaction [protein]-peptidylproline (omega=180) = [protein]-peptidylproline (omega=0). Its activity is regulated as follows. Inhibited by both FK506 and rapamycin. Functionally, PPIases accelerate the folding of proteins. It catalyzes the cis-trans isomerization of proline imidic peptide bonds in oligopeptides. This is FK506-binding protein 2 (fkbB) from Emericella nidulans (strain FGSC A4 / ATCC 38163 / CBS 112.46 / NRRL 194 / M139) (Aspergillus nidulans).